Reading from the N-terminus, the 178-residue chain is Large ribosomal subunit protein uL6 (178 aa).

It belongs to the universal ribosomal protein uL6 family. As to quaternary structure, part of the 50S ribosomal subunit.

Its function is as follows. This protein binds to the 23S rRNA, and is important in its secondary structure. It is located near the subunit interface in the base of the L7/L12 stalk, and near the tRNA binding site of the peptidyltransferase center. The protein is Large ribosomal subunit protein uL6 of Shouchella clausii (strain KSM-K16) (Alkalihalobacillus clausii).